The primary structure comprises 373 residues: Protein phosphatase 1K, mitochondrial (373 aa).

A PPM-type phosphatase domain is found at 95 to 347; the sequence is KVGCSTQLGK…DNSTAIVVPF (253 aa). Residues D128, G129, and D338 each contribute to the Mg(2+) site.

It belongs to the PP2C family. Requires Mg(2+) as cofactor. Mn(2+) is required as a cofactor.

Its subcellular location is the mitochondrion matrix. The catalysed reaction is O-phospho-L-seryl-[protein] + H2O = L-seryl-[protein] + phosphate. It carries out the reaction O-phospho-L-threonyl-[protein] + H2O = L-threonyl-[protein] + phosphate. This is Protein phosphatase 1K, mitochondrial (ppm1k) from Xenopus laevis (African clawed frog).